A 347-amino-acid chain; its full sequence is Haptoglobin (347 aa).

An N-terminal signal peptide occupies residues 1-18; that stretch reads MRALGAVVTLLLWGQLFA. The Sushi domain occupies 31 to 88; it reads DSCPKPPEIANGYVEHLVRYRCRQFYRLRTEGDGVYTLNDEKQWVNTAAGEKLPECEA. Disulfide bonds link Cys-52-Cys-86, Cys-90-Cys-207, Cys-250-Cys-281, and Cys-292-Cys-322. The Peptidase S1 domain occupies 103–345; the sequence is IIGGSMDAKG…LKDWVQETMA (243 aa). Asn-148, Asn-182, Asn-256, and Asn-264 each carry an N-linked (GlcNAc...) asparagine glycan. Residues 259-264 form an interaction with CD163 region; the sequence is VPEKKN.

The protein belongs to the peptidase S1 family. As to quaternary structure, tetramer of two alpha and two beta chains; disulfide-linked. The hemoglobin/haptoglobin complex is composed of a haptoglobin dimer bound to two hemoglobin alpha-beta dimers. Interacts with CD163. Interacts with ERGIC3. As to expression, expressed by the liver and secreted in plasma.

The protein resides in the secreted. In terms of biological role, as a result of hemolysis, hemoglobin is found to accumulate in the kidney and is secreted in the urine. Haptoglobin captures, and combines with free plasma hemoglobin to allow hepatic recycling of heme iron and to prevent kidney damage. Haptoglobin also acts as an antioxidant, has antibacterial activity and plays a role in modulating many aspects of the acute phase response. Hemoglobin/haptoglobin complexes are rapidly cleared by the macrophage CD163 scavenger receptor expressed on the surface of liver Kupfer cells through an endocytic lysosomal degradation pathway. The polypeptide is Haptoglobin (Hp) (Mus saxicola (Brown spiny mouse)).